The chain runs to 252 residues: Imidazole glycerol phosphate synthase subunit HisF (252 aa).

Active-site residues include Asp13 and Asp132.

It belongs to the HisA/HisF family. Heterodimer of HisH and HisF.

The protein resides in the cytoplasm. The enzyme catalyses 5-[(5-phospho-1-deoxy-D-ribulos-1-ylimino)methylamino]-1-(5-phospho-beta-D-ribosyl)imidazole-4-carboxamide + L-glutamine = D-erythro-1-(imidazol-4-yl)glycerol 3-phosphate + 5-amino-1-(5-phospho-beta-D-ribosyl)imidazole-4-carboxamide + L-glutamate + H(+). The protein operates within amino-acid biosynthesis; L-histidine biosynthesis; L-histidine from 5-phospho-alpha-D-ribose 1-diphosphate: step 5/9. IGPS catalyzes the conversion of PRFAR and glutamine to IGP, AICAR and glutamate. The HisF subunit catalyzes the cyclization activity that produces IGP and AICAR from PRFAR using the ammonia provided by the HisH subunit. The sequence is that of Imidazole glycerol phosphate synthase subunit HisF from Campylobacter curvus (strain 525.92).